The primary structure comprises 200 residues: Troponin I-like protein (200 aa).

2 disordered regions span residues 1–20 (MGDEEKRKMEEKERKKAEVR) and 181–200 (ENKADKKPEWALGSKKENEE). Positions 2–116 (GDEEKRKMEE…EDAKYDLEYE (115 aa)) form a coiled coil.

The protein belongs to the troponin I family. In terms of tissue distribution, expressed in salivary gland, gut, muscle and cuticle (at protein level).

Its function is as follows. Inhibits endothelial cell proliferation and angiogenesis in a vertebrate host. Probably required for efficient blood feeding on vertebrate hosts. The sequence is that of Troponin I-like protein from Haemaphysalis longicornis (Bush tick).